The sequence spans 433 residues: MRNLLRGMLVVICCMAGIVMADEKNILVTSGSDRATPIAVVPFGFQGGAVLPDDMAEIIGNDLRNSGYYSPIPKQNMISQPSQPSEIIFRDWKAVGAQYMMVGSIVPAGGRLQVQWALFNVATEQKVADGSVSGTTEQLRDMAHYISDQSFEKLTGIKGAFSTRLLYVTAERFSEKNTRYTLQRSDYDGARAVTLLQSREPILSPRFAPDGKRIAYVSFEQKRPRIFMQNIDTGRREQITNFEGLNGAPAWSPDGNRLAFVLSKDGNPDIYVMNLGSRQITRVTAGPGINTEPYWGKDGSTIYFTSDRGGKPQIYKTSAGGGGAERVTFVGNYNANPKLSADEKTLVMIHRQDGFTNFKVAAQDLQRGSVKILTDSTLDESPTVAPNGTMVIYATRQQGRGVLMLVSINGRVRLPLPTAQGEVREPSWSPYLN.

Positions 1–21 are cleaved as a signal peptide; the sequence is MRNLLRGMLVVICCMAGIVMA.

It belongs to the TolB family. As to quaternary structure, the Tol-Pal system is composed of five core proteins: the inner membrane proteins TolA, TolQ and TolR, the periplasmic protein TolB and the outer membrane protein Pal. They form a network linking the inner and outer membranes and the peptidoglycan layer.

It is found in the periplasm. Part of the Tol-Pal system, which plays a role in outer membrane invagination during cell division and is important for maintaining outer membrane integrity. This Pseudomonas fluorescens (strain Pf0-1) protein is Tol-Pal system protein TolB.